Consider the following 259-residue polypeptide: Undecaprenyl-diphosphatase 3 (259 aa).

8 helical membrane-spanning segments follow: residues 1–21 (MNWL…FLPI), 39–59 (AGLF…FIYY), 71–91 (FSKL…IGLL), 99–119 (ISKT…FLYM), 133–153 (ITYK…FPAI), 174–194 (AYFS…LQFV), 208–228 (SLIV…SWMI), and 239–259 (FAYY…TDVF).

This sequence belongs to the UppP family.

Its subcellular location is the cell membrane. The enzyme catalyses di-trans,octa-cis-undecaprenyl diphosphate + H2O = di-trans,octa-cis-undecaprenyl phosphate + phosphate + H(+). In terms of biological role, catalyzes the dephosphorylation of undecaprenyl diphosphate (UPP). Confers resistance to bacitracin. The polypeptide is Undecaprenyl-diphosphatase 3 (Bacillus cereus (strain ATCC 14579 / DSM 31 / CCUG 7414 / JCM 2152 / NBRC 15305 / NCIMB 9373 / NCTC 2599 / NRRL B-3711)).